Reading from the N-terminus, the 143-residue chain is MSGNKMKMEFLSKSQNESFARVAVAAFISQLDPTMEEITDVKTAVSEAVTNSIIHGYGDREDGIVKIQCEIFEKDITIIVEDDGIGIEDVKQAMTPLYTSRPDLERSGMGFTVMETFMDELRVESTEKNGTRIIMKKKLKSIE.

Belongs to the anti-sigma-factor family.

It catalyses the reaction L-seryl-[protein] + ATP = O-phospho-L-seryl-[protein] + ADP + H(+). It carries out the reaction L-threonyl-[protein] + ATP = O-phospho-L-threonyl-[protein] + ADP + H(+). Binds to sigma F and blocks its ability to form an RNA polymerase holoenzyme (E-sigma F). Phosphorylates SpoIIAA on a serine residue. This phosphorylation may enable SpoIIAA to act as an anti-anti-sigma factor that counteracts SpoIIAB and thus releases sigma F from inhibition. The polypeptide is Anti-sigma F factor (Clostridium novyi (strain NT)).